Consider the following 55-residue polypeptide: Large ribosomal subunit protein bL33 (55 aa).

Belongs to the bacterial ribosomal protein bL33 family.

This chain is Large ribosomal subunit protein bL33, found in Rhodospirillum centenum (strain ATCC 51521 / SW).